Here is a 445-residue protein sequence, read N- to C-terminus: Chromosomal replication initiator protein DnaA (445 aa).

Residues 1-73 (MSTHLTETWE…VNALKLLTSK (73 aa)) form a domain I, interacts with DnaA modulators region. The interval 73–106 (KKYNIDFIVTTEEKIEKNHNNEKSNIVVNDEMST) is domain II. The segment at 107–323 (MLNPKYTFDS…GALIRIVAFS (217 aa)) is domain III, AAA+ region. ATP-binding residues include glycine 151, glycine 153, lysine 154, and threonine 155. A domain IV, binds dsDNA region spans residues 324 to 445 (SLTNKEISVD…NDLNKRINQK (122 aa)).

The protein belongs to the DnaA family. In terms of assembly, oligomerizes as a right-handed, spiral filament on DNA at oriC.

Its subcellular location is the cytoplasm. Its function is as follows. Plays an essential role in the initiation and regulation of chromosomal replication. ATP-DnaA binds to the origin of replication (oriC) to initiate formation of the DNA replication initiation complex once per cell cycle. Binds the DnaA box (a 9 base pair repeat at the origin) and separates the double-stranded (ds)DNA. Forms a right-handed helical filament on oriC DNA; dsDNA binds to the exterior of the filament while single-stranded (ss)DNA is stabiized in the filament's interior. The ATP-DnaA-oriC complex binds and stabilizes one strand of the AT-rich DNA unwinding element (DUE), permitting loading of DNA polymerase. After initiation quickly degrades to an ADP-DnaA complex that is not apt for DNA replication. Binds acidic phospholipids. The protein is Chromosomal replication initiator protein DnaA of Clostridium botulinum (strain Loch Maree / Type A3).